The primary structure comprises 552 residues: Putative transport protein YPN_3727 (552 aa).

6 helical membrane-spanning segments follow: residues 1 to 21 (MSAI…GLWI), 26 to 46 (IYGV…VGHF), 65 to 85 (FGLI…FFSS), 96 to 116 (FAIL…KLFA), 119 to 139 (LPII…LGAA), and 158 to 178 (MGYA…MWLI). RCK C-terminal domains follow at residues 192-276 (AFDS…VVGE) and 279-361 (DVTL…IVGN). 6 consecutive transmembrane segments (helical) span residues 371–391 (MLPV…PLFV), 393–413 (GFPA…ALIL), 439–459 (IVLF…NTLV), 464–484 (LAWI…VGIL), 493–513 (YLTL…LAFA), and 530–550 (VYPL…VLFW).

This sequence belongs to the AAE transporter (TC 2.A.81) family. YidE subfamily.

It localises to the cell membrane. The sequence is that of Putative transport protein YPN_3727 from Yersinia pestis bv. Antiqua (strain Nepal516).